Here is a 597-residue protein sequence, read N- to C-terminus: Cytosolic Fe-S cluster assembly factor nar1 (597 aa).

Residue cysteine 20 participates in [4Fe-4S] cluster binding. The tract at residues 25–46 (ESLPQKESQSENPYEVTKEDKV) is disordered. The [4Fe-4S] cluster site is built by cysteine 61, cysteine 64, cysteine 67, cysteine 208, and cysteine 263. A disordered region spans residues 424–449 (RLPGAKPQAVSSSANRRQPMSRNAAP). A compositionally biased stretch (polar residues) spans 432–444 (AVSSSANRRQPMS). Cysteine 464 and cysteine 468 together coordinate [4Fe-4S] cluster.

The protein belongs to the NARF family.

Component of the cytosolic Fe/S protein assembly machinery. Required for maturation of extramitochondrial Fe/S proteins. May play a role in the transfer of pre-assembled Fe/S clusters to target apoproteins. This is Cytosolic Fe-S cluster assembly factor nar1 (nar1) from Aspergillus fumigatus (strain ATCC MYA-4609 / CBS 101355 / FGSC A1100 / Af293) (Neosartorya fumigata).